The sequence spans 353 residues: GTPase Obg (353 aa).

The Obg domain maps to 1–159 (MKFIDEATIK…FELYLELKVL (159 aa)). The OBG-type G domain maps to 160 to 332 (ADVGLLGMPN…LTYAIMEHVE (173 aa)). GTP is bound by residues 166 to 173 (GMPNAGKS), 191 to 195 (FTTLH), 213 to 216 (DVPG), 284 to 287 (NKVD), and 313 to 315 (SAL). Residues Ser173 and Thr193 each coordinate Mg(2+).

The protein belongs to the TRAFAC class OBG-HflX-like GTPase superfamily. OBG GTPase family. As to quaternary structure, monomer. Mg(2+) serves as cofactor.

Its subcellular location is the cytoplasm. An essential GTPase which binds GTP, GDP and possibly (p)ppGpp with moderate affinity, with high nucleotide exchange rates and a fairly low GTP hydrolysis rate. Plays a role in control of the cell cycle, stress response, ribosome biogenesis and in those bacteria that undergo differentiation, in morphogenesis control. The chain is GTPase Obg from Methylobacillus flagellatus (strain ATCC 51484 / DSM 6875 / VKM B-1610 / KT).